We begin with the raw amino-acid sequence, 541 residues long: Eukaryotic translation initiation factor 3 subunit E (541 aa).

Residues 252 to 443 (VEMFLSPVYL…GMVFMNPTHP (192 aa)) form the PCI domain. The interval 466 to 541 (AIDRKAHPPS…QQPAQAIAAN (76 aa)) is disordered. Over residues 490–502 (NAGGRGGRGGQRN) the composition is skewed to gly residues. Basic and acidic residues predominate over residues 506 to 522 (QRDRSHAHNNEAKREGE). Over residues 523 to 541 (SASAEEAQQQQPAQAIAAN) the composition is skewed to low complexity.

The protein belongs to the eIF-3 subunit E family. Component of the eukaryotic translation initiation factor 3 (eIF-3) complex.

The protein resides in the cytoplasm. Functionally, component of the eukaryotic translation initiation factor 3 (eIF-3) complex, which is involved in protein synthesis of a specialized repertoire of mRNAs and, together with other initiation factors, stimulates binding of mRNA and methionyl-tRNAi to the 40S ribosome. The eIF-3 complex specifically targets and initiates translation of a subset of mRNAs involved in cell proliferation. The protein is Eukaryotic translation initiation factor 3 subunit E of Mycosarcoma maydis (Corn smut fungus).